The following is a 777-amino-acid chain: Glucocorticoid receptor (777 aa).

Basic and acidic residues predominate over residues 1–14 (MDSKESLTPGKEEN). A disordered region spans residues 1–23 (MDSKESLTPGKEENPSSVLTQER). Residues 1–420 (MDSKESLTPG…TATTGPPPKL (420 aa)) are modulating. At Thr-8 the chain carries Phosphothreonine. The residue at position 23 (Arg-23) is an Omega-N-methylarginine. Phosphoserine occurs at positions 45, 113, 134, and 141. The segment at 130-182 (NRSTSVPENPKSSASSSVSAAPKEKEFPKTHSDVSSEQQNLKGQTGTNGGNVK) is disordered. The segment covering 134-150 (SVPENPKSSASSSVSAA) has biased composition (low complexity). The segment covering 151–163 (PKEKEFPKTHSDV) has biased composition (basic and acidic residues). Residues 164-174 (SSEQQNLKGQT) show a composition bias toward polar residues. Residues Ser-203, Ser-211, and Ser-226 each carry the phosphoserine modification. Lys-258 is covalently cross-linked (Glycyl lysine isopeptide (Lys-Gly) (interchain with G-Cter in SUMO2)). Position 267 is a phosphoserine (Ser-267). Residues Lys-277 and Lys-293 each participate in a glycyl lysine isopeptide (Lys-Gly) (interchain with G-Cter in SUMO); alternate cross-link. Residues Lys-277 and Lys-293 each participate in a glycyl lysine isopeptide (Lys-Gly) (interchain with G-Cter in SUMO2); alternate cross-link. Over residues 394–414 (SSPSMRPDVSSPPSSSSTATT) the composition is skewed to low complexity. The disordered stretch occupies residues 394-415 (SSPSMRPDVSSPPSSSSTATTG). Ser-404 carries the phosphoserine modification. A Glycyl lysine isopeptide (Lys-Gly) (interchain with G-Cter in ubiquitin) cross-link involves residue Lys-419. 2 NR C4-type zinc fingers span residues 421–441 (CLVC…CGSC) and 457–481 (CAGR…YRKC). The segment at residues 421–486 (CLVCSDEASG…RYRKCLQAGM (66 aa)) is a DNA-binding region (nuclear receptor). 4 positions are modified to N6-acetyllysine: Lys-480, Lys-492, Lys-494, and Lys-495. Positions 485 to 777 (GMNLEARKTK…NIKKLLFHQK (293 aa)) are interaction with CLOCK. The hinge stretch occupies residues 487 to 523 (NLEARKTKKKIKGIQQATTGVSQETSENPANKTIVPA). Positions 524-758 (TLPQLTPTLV…FPEMLAEIIT (235 aa)) constitute an NR LBD domain. Positions 532–697 (LVSLLEVIEP…EIRMTYIKEL (166 aa)) are interaction with CRY1. Lys-703 is covalently cross-linked (Glycyl lysine isopeptide (Lys-Gly) (interchain with G-Cter in SUMO)).

It belongs to the nuclear hormone receptor family. NR3 subfamily. Heteromultimeric cytoplasmic complex with HSP90AA1, HSPA1A/HSPA1B, and FKBP5 or another immunophilin such as PPID, STIP1, or the immunophilin homolog PPP5C. Upon ligand binding FKBP5 dissociates from the complex and FKBP4 takes its place, thereby linking the complex to dynein and mediating transport to the nucleus, where the complex dissociates. Probably forms a complex composed of chaperones HSP90 and HSP70, co-chaperones CDC37, PPP5C, TSC1 and client protein TSC2, CDK4, AKT, RAF1 and NR3C1; this complex does not contain co-chaperones STIP1/HOP and PTGES3/p23. Directly interacts with UNC45A. Binds to DNA as a homodimer, and as heterodimer with NR3C2 or the retinoid X receptor. Binds STAT5A and STAT5B homodimers and heterodimers. Interacts with NRIP1, POU2F1, POU2F2 and TRIM28. Interacts with several coactivator complexes, including the SMARCA4 complex, CREBBP/EP300, TADA2L (Ada complex) and p160 coactivators such as NCOA2 and NCOA6. Interaction with BAG1 inhibits transactivation. Interacts with HEXIM1 and TGFB1I1. Interacts with NCOA1. Interacts with NCOA3, SMARCA4, SMARCC1, SMARCD1, and SMARCE1. Interacts with CLOCK, CRY1 and CRY2 in a ligand-dependent fashion. Interacts with CIART. Interacts with RWDD3. Interacts with UBE2I/UBC9 and this interaction is enhanced in the presence of RWDD3. Interacts with GRIP1. Interacts with NR4A3 (via nuclear receptor DNA-binding domain), represses transcription activity of NR4A3 on the POMC promoter Nur response element (NurRE). Directly interacts with PNRC2 to attract and form a complex with UPF1 and DCP1A; the interaction leads to rapid mRNA degradation. Interacts with GSK3B. Interacts with FNIP1 and FNIP2. Interacts (via C-terminus) with HNRNPU (via C-terminus). Interacts with MCM3AP. Interacts (via domain NR LBD) with HSP90AA1 and HSP90AB1. In the absence of hormonal ligand, interacts with TACC1. Interacts (via NR LBD domain) with ZNF764 (via KRAB domain); the interaction regulates transcription factor activity of NR3C1 by directing its actions toward certain biologic pathways. Acetylation by CLOCK reduces its binding to glucocorticoid response elements and its transcriptional activity. Post-translationally, increased proteasome-mediated degradation in response to glucocorticoids. In terms of processing, phosphorylated in the absence of hormone; becomes hyperphosphorylated in the presence of glucocorticoid. The Ser-203, Ser-226 and Ser-404-phosphorylated forms are mainly cytoplasmic, and the Ser-211-phosphorylated form is nuclear. Phosphorylation at Ser-211 increases transcriptional activity. Phosphorylation at Ser-203, Ser-226 and Ser-404 decreases signaling capacity. Phosphorylation at Ser-404 may protect from glucocorticoid-induced apoptosis. Phosphorylation at Ser-203 and Ser-211 is not required in regulation of chromosome segregation. May be dephosphorylated by PPP5C, attenuates NR3C1 action. Ubiquitinated by UBR5, leading to its degradation: UBR5 specifically recognizes and binds ligand-bound NR3C1 when it is not associated with coactivators (NCOAs). In presence of NCOAs, the UBR5-degron is not accessible, preventing its ubiquitination and degradation. Post-translationally, sumoylation at Lys-277 and Lys-293 negatively regulates its transcriptional activity. Sumoylation at Lys-703 positively regulates its transcriptional activity in the presence of RWDD3. Sumoylation at Lys-277 and Lys-293 is dispensable whereas sumoylation at Lys-703 is critical for the stimulatory effect of RWDD3 on its transcriptional activity. Heat shock increases sumoylation in a RWWD3-dependent manner.

It localises to the cytoplasm. It is found in the nucleus. Its subcellular location is the mitochondrion. The protein localises to the cytoskeleton. The protein resides in the spindle. It localises to the microtubule organizing center. It is found in the centrosome. Its subcellular location is the chromosome. The protein localises to the nucleoplasm. Functionally, receptor for glucocorticoids (GC). Has a dual mode of action: as a transcription factor that binds to glucocorticoid response elements (GRE), both for nuclear and mitochondrial DNA, and as a modulator of other transcription factors. Affects inflammatory responses, cellular proliferation and differentiation in target tissues. Involved in chromatin remodeling. Plays a role in rapid mRNA degradation by binding to the 5' UTR of target mRNAs and interacting with PNRC2 in a ligand-dependent manner which recruits the RNA helicase UPF1 and the mRNA-decapping enzyme DCP1A, leading to RNA decay. Could act as a coactivator for STAT5-dependent transcription upon growth hormone (GH) stimulation and could reveal an essential role of hepatic GR in the control of body growth. Mediates glucocorticoid-induced apoptosis. Promotes accurate chromosome segregation during mitosis. May act as a tumor suppressor. May play a negative role in adipogenesis through the regulation of lipolytic and antilipogenic gene expression. The chain is Glucocorticoid receptor (NR3C1) from Aotus nancymaae (Ma's night monkey).